A 260-amino-acid chain; its full sequence is Type III pantothenate kinase (260 aa).

6 to 13 (DVGNTNIT) lines the ATP pocket. 107–110 (GADR) lines the substrate pocket. Catalysis depends on D109, which acts as the Proton acceptor. Residue D129 participates in K(+) binding. T132 contributes to the ATP binding site. T184 contacts substrate.

Belongs to the type III pantothenate kinase family. In terms of assembly, homodimer. Requires NH4(+) as cofactor. K(+) serves as cofactor.

Its subcellular location is the cytoplasm. It carries out the reaction (R)-pantothenate + ATP = (R)-4'-phosphopantothenate + ADP + H(+). It participates in cofactor biosynthesis; coenzyme A biosynthesis; CoA from (R)-pantothenate: step 1/5. In terms of biological role, catalyzes the phosphorylation of pantothenate (Pan), the first step in CoA biosynthesis. The sequence is that of Type III pantothenate kinase from Agathobacter rectalis (strain ATCC 33656 / DSM 3377 / JCM 17463 / KCTC 5835 / VPI 0990) (Eubacterium rectale).